The sequence spans 575 residues: Phosphoenolpyruvate-protein phosphotransferase (575 aa).

H191 (tele-phosphohistidine intermediate) is an active-site residue. Residues R298 and R334 each contribute to the phosphoenolpyruvate site. E435 and D459 together coordinate Mg(2+). Phosphoenolpyruvate is bound by residues 458–459 (ND) and R469. Catalysis depends on C506, which acts as the Proton donor.

It belongs to the PEP-utilizing enzyme family. As to quaternary structure, homodimer. It depends on Mg(2+) as a cofactor.

The protein localises to the cytoplasm. It catalyses the reaction L-histidyl-[protein] + phosphoenolpyruvate = N(pros)-phospho-L-histidyl-[protein] + pyruvate. In terms of biological role, general (non sugar-specific) component of the phosphoenolpyruvate-dependent sugar phosphotransferase system (sugar PTS). This major carbohydrate active-transport system catalyzes the phosphorylation of incoming sugar substrates concomitantly with their translocation across the cell membrane. Enzyme I transfers the phosphoryl group from phosphoenolpyruvate (PEP) to the phosphoryl carrier protein (HPr). This Enterococcus faecalis (strain ATCC 700802 / V583) protein is Phosphoenolpyruvate-protein phosphotransferase (ptsI).